The sequence spans 378 residues: B3 domain-containing protein Os03g0622200 (378 aa).

Positions 29–124 (SKHFLKHMVG…SFDVLIFDPS (96 aa)) form a DNA-binding region, TF-B3 1. The segment at 140–159 (GRAENSAGAEQGGRNGRRTP) is disordered. The TF-B3 2 DNA-binding region spans 256–370 (FVQVIHSSHV…TMTVHVLRRV (115 aa)).

It is found in the nucleus. This Oryza sativa subsp. japonica (Rice) protein is B3 domain-containing protein Os03g0622200.